The primary structure comprises 486 residues: Citrate synthase 3, mitochondrial (486 aa).

The transit peptide at 1–23 directs the protein to the mitochondrion; the sequence is MVQRLLPGAHICRRSFNSSAIIK. Catalysis depends on residues H315, H361, and D419. The short motif at 484–486 is the Microbody targeting signal element; it reads NKL.

It belongs to the citrate synthase family.

The protein resides in the mitochondrion. It carries out the reaction oxaloacetate + acetyl-CoA + H2O = citrate + CoA + H(+). Its pathway is carbohydrate metabolism; tricarboxylic acid cycle; isocitrate from oxaloacetate: step 1/2. Functionally, dual specificity mitochondrial citrate and methylcitrate synthase with similar catalytic efficiency with both acetyl-CoA and propionyl-CoA. The sequence is that of Citrate synthase 3, mitochondrial from Saccharomyces cerevisiae (strain ATCC 204508 / S288c) (Baker's yeast).